A 187-amino-acid chain; its full sequence is ATP synthase subunit b 2 (187 aa).

Residues 39–61 (SQLVWLVLSFAALYLLMSRVALP) form a helical membrane-spanning segment.

Belongs to the ATPase B chain family. F-type ATPases have 2 components, F(1) - the catalytic core - and F(0) - the membrane proton channel. F(1) has five subunits: alpha(3), beta(3), gamma(1), delta(1), epsilon(1). F(0) has three main subunits: a(1), b(2) and c(10-14). The alpha and beta chains form an alternating ring which encloses part of the gamma chain. F(1) is attached to F(0) by a central stalk formed by the gamma and epsilon chains, while a peripheral stalk is formed by the delta and b chains.

It localises to the cell inner membrane. Functionally, f(1)F(0) ATP synthase produces ATP from ADP in the presence of a proton or sodium gradient. F-type ATPases consist of two structural domains, F(1) containing the extramembraneous catalytic core and F(0) containing the membrane proton channel, linked together by a central stalk and a peripheral stalk. During catalysis, ATP synthesis in the catalytic domain of F(1) is coupled via a rotary mechanism of the central stalk subunits to proton translocation. Its function is as follows. Component of the F(0) channel, it forms part of the peripheral stalk, linking F(1) to F(0). This is ATP synthase subunit b 2 from Parvibaculum lavamentivorans (strain DS-1 / DSM 13023 / NCIMB 13966).